We begin with the raw amino-acid sequence, 486 residues long: N-succinylglutamate 5-semialdehyde dehydrogenase (486 aa).

220 to 225 (GSSRTG) is a binding site for NAD(+). Residues glutamate 243 and cysteine 277 contribute to the active site.

This sequence belongs to the aldehyde dehydrogenase family. AstD subfamily.

It catalyses the reaction N-succinyl-L-glutamate 5-semialdehyde + NAD(+) + H2O = N-succinyl-L-glutamate + NADH + 2 H(+). It participates in amino-acid degradation; L-arginine degradation via AST pathway; L-glutamate and succinate from L-arginine: step 4/5. Catalyzes the NAD-dependent reduction of succinylglutamate semialdehyde into succinylglutamate. The polypeptide is N-succinylglutamate 5-semialdehyde dehydrogenase (Shewanella frigidimarina (strain NCIMB 400)).